A 128-amino-acid polypeptide reads, in one-letter code: Fluoride-specific ion channel FluC (128 aa).

Helical transmembrane passes span 4 to 24 (LLLV…VGVQ), 37 to 57 (TFIV…WLAL), 72 to 92 (VGVM…ALMI), and 101 to 121 (FTYT…GLLI). Gly-76 and Thr-79 together coordinate Na(+).

This sequence belongs to the fluoride channel Fluc/FEX (TC 1.A.43) family.

The protein localises to the cell inner membrane. The catalysed reaction is fluoride(in) = fluoride(out). With respect to regulation, na(+) is not transported, but it plays an essential structural role and its presence is essential for fluoride channel function. Functionally, fluoride-specific ion channel. Important for reducing fluoride concentration in the cell, thus reducing its toxicity. The polypeptide is Fluoride-specific ion channel FluC (Caulobacter sp. (strain K31)).